The sequence spans 468 residues: Aldehyde dehydrogenase family 3 member B1 (468 aa).

N-acetylmethionine is present on Met1. 188 to 193 (GNAYVG) contributes to the NAD(+) binding site. Active-site residues include Glu210 and Cys244. Residues Cys462 and Cys463 are each lipidated (S-palmitoyl cysteine). Cys465 bears the Cysteine methyl ester mark. A lipid anchor (S-geranylgeranyl cysteine) is attached at Cys465. Residues 466–468 (TLL) constitute a propeptide, removed in mature form.

This sequence belongs to the aldehyde dehydrogenase family. Post-translationally, dually lipidated in the C-terminus; prenylation occurs prior to, and is a prerequisite for palmitoylation. It is also required for activity towards long-chain substrates. Highly expressed in kidney and liver. In brain is expressed at moderate levels in cortex, striatum and hippocampus, and at lower levels in brainstem and cerebellum.

It is found in the cell membrane. The catalysed reaction is an aldehyde + NAD(+) + H2O = a carboxylate + NADH + 2 H(+). It carries out the reaction a long-chain fatty aldehyde + NAD(+) + H2O = a long-chain fatty acid + NADH + 2 H(+). The enzyme catalyses a medium-chain fatty aldehyde + NAD(+) + H2O = a medium-chain fatty acid + NADH + 2 H(+). It catalyses the reaction octanal + NAD(+) + H2O = octanoate + NADH + 2 H(+). The catalysed reaction is nonanal + NAD(+) + H2O = nonanoate + NADH + 2 H(+). It carries out the reaction hexadecanoate + NADH + 2 H(+) = hexadecanal + NAD(+) + H2O. The enzyme catalyses (2E)-octenal + NAD(+) + H2O = (2E)-octenoate + NADH + 2 H(+). It catalyses the reaction (E)-non-2-enal + NAD(+) + H2O = (E)-non-2-enoate + NADH + 2 H(+). The catalysed reaction is (E)-4-hydroxynon-2-enal + NAD(+) + H2O = (E)-4-hydroxynon-2-enoate + NADH + 2 H(+). It carries out the reaction (2E)-hexadecenal + NAD(+) + H2O = (E)-hexadec-2-enoate + NADH + 2 H(+). The enzyme catalyses benzaldehyde + NAD(+) + H2O = benzoate + NADH + 2 H(+). It catalyses the reaction an aldehyde + NADP(+) + H2O = a carboxylate + NADPH + 2 H(+). The catalysed reaction is a medium-chain fatty aldehyde + NADP(+) + H2O = a medium-chain fatty acid + NADPH + 2 H(+). It carries out the reaction hexanal + NADP(+) + H2O = hexanoate + NADPH + 2 H(+). The enzyme catalyses octanal + NADP(+) + H2O = octanoate + NADPH + 2 H(+). It catalyses the reaction nonanal + NADP(+) + H2O = nonanoate + NADPH + 2 H(+). The catalysed reaction is (2E)-octenal + NADP(+) + H2O = (2E)-octenoate + NADPH + 2 H(+). It carries out the reaction (E)-non-2-enal + NADP(+) + H2O = (E)-non-2-enoate + NADPH + 2 H(+). The enzyme catalyses (E)-4-hydroxynon-2-enal + NADP(+) + H2O = (E)-4-hydroxynon-2-enoate + NADPH + 2 H(+). It catalyses the reaction benzaldehyde + NADP(+) + H2O = benzoate + NADPH + 2 H(+). Its pathway is alcohol metabolism; ethanol degradation; acetate from ethanol: step 2/2. Its function is as follows. Oxidizes medium and long chain saturated and unsaturated fatty aldehydes generated in the plasma membrane into non-toxic fatty acids. May have a protective role against the cytotoxicity induced by lipid peroxidation. Short-chain fatty aldehydes are not good substrates. Can use both NADP(+) and NAD(+) as electron acceptor in vitro, however in vivo preference will depend on their tissue levels. Low activity towards acetaldehyde and 3,4-dihydroxyphenylacetaldehyde. Able to metabolize aromatic aldehydes such as benzaldehyde to their acid form. The protein is Aldehyde dehydrogenase family 3 member B1 (Aldh3b1) of Mus musculus (Mouse).